Consider the following 136-residue polypeptide: UPF0213 protein AHA_3736 (136 aa).

The 76-residue stretch at 17-92 folds into the GIY-YIG domain; the sequence is SHWFIYMVRT…KQQSKAFKEQ (76 aa). Residues 114–136 are disordered; sequence QKRPRYAAAKEGSDNRECQRQVD. The segment covering 124 to 136 has biased composition (basic and acidic residues); the sequence is EGSDNRECQRQVD.

This sequence belongs to the UPF0213 family.

This Aeromonas hydrophila subsp. hydrophila (strain ATCC 7966 / DSM 30187 / BCRC 13018 / CCUG 14551 / JCM 1027 / KCTC 2358 / NCIMB 9240 / NCTC 8049) protein is UPF0213 protein AHA_3736.